A 527-amino-acid polypeptide reads, in one-letter code: Peptide chain release factor 3 (527 aa).

Residues 9–277 form the tr-type G domain; it reads AKRRTFAIIS…AVVNWAPKPL (269 aa). GTP is bound by residues 18–25, 86–90, and 140–143; these read SHPDAGKT, DTPGH, and NKLD.

This sequence belongs to the TRAFAC class translation factor GTPase superfamily. Classic translation factor GTPase family. PrfC subfamily.

It is found in the cytoplasm. Functionally, increases the formation of ribosomal termination complexes and stimulates activities of RF-1 and RF-2. It binds guanine nucleotides and has strong preference for UGA stop codons. It may interact directly with the ribosome. The stimulation of RF-1 and RF-2 is significantly reduced by GTP and GDP, but not by GMP. This Pseudomonas syringae pv. syringae (strain B728a) protein is Peptide chain release factor 3.